Reading from the N-terminus, the 170-residue chain is NADH-quinone oxidoreductase subunit B (170 aa).

C46, C47, C111, and C141 together coordinate [4Fe-4S] cluster.

It belongs to the complex I 20 kDa subunit family. NDH-1 is composed of 14 different subunits. Subunits NuoB, C, D, E, F, and G constitute the peripheral sector of the complex. Requires [4Fe-4S] cluster as cofactor.

Its subcellular location is the cell membrane. It catalyses the reaction a quinone + NADH + 5 H(+)(in) = a quinol + NAD(+) + 4 H(+)(out). Functionally, NDH-1 shuttles electrons from NADH, via FMN and iron-sulfur (Fe-S) centers, to quinones in the respiratory chain. The immediate electron acceptor for the enzyme in this species is believed to be a menaquinone. Couples the redox reaction to proton translocation (for every two electrons transferred, four hydrogen ions are translocated across the cytoplasmic membrane), and thus conserves the redox energy in a proton gradient. The polypeptide is NADH-quinone oxidoreductase subunit B (Geobacillus thermodenitrificans (strain NG80-2)).